A 208-amino-acid chain; its full sequence is Thioredoxin domain-containing protein 9 (208 aa).

The 112-residue stretch at 68 to 179 (YEEVADEKEF…MENRLARSEV (112 aa)) folds into the Thioredoxin domain.

In terms of tissue distribution, expressed throughout the body with high expression in the nervous system, including the ventral nerve cord and tail neurons, and vulva.

It is found in the nucleus. It localises to the cytoplasm. Its function is as follows. Required for normal microtubule organization and function. Regulates tubulin acetylation in ALM and PLM neurons. This Caenorhabditis elegans protein is Thioredoxin domain-containing protein 9.